The primary structure comprises 117 residues: Large ribosomal subunit protein bL20c (117 aa).

It belongs to the bacterial ribosomal protein bL20 family.

Its subcellular location is the plastid. It localises to the chloroplast. Its function is as follows. Binds directly to 23S ribosomal RNA and is necessary for the in vitro assembly process of the 50S ribosomal subunit. It is not involved in the protein synthesizing functions of that subunit. The chain is Large ribosomal subunit protein bL20c from Populus alba (White poplar).